We begin with the raw amino-acid sequence, 349 residues long: Protein O-mannose kinase (349 aa).

The Cytoplasmic segment spans residues 1-19 (MGQQHGTRNGLTHRELPRG). A helical; Signal-anchor for type II membrane protein transmembrane segment spans residues 20 to 42 (VGLLLAMALMNVALYLCLDQLFI). Topologically, residues 43–349 (SPGRSTADSR…TVMSQTKEML (307 aa)) are lumenal. Residues Asn-66, Asn-164, and Asn-219 are each glycosylated (N-linked (GlcNAc...) asparagine). In terms of domain architecture, Protein kinase spans 80 to 349 (VRQLKRVGEG…TVMSQTKEML (270 aa)).

This sequence belongs to the protein kinase superfamily. Ser/Thr protein kinase family. STKL subfamily.

It localises to the endoplasmic reticulum membrane. It carries out the reaction 3-O-[beta-D-GalNAc-(1-&gt;3)-beta-D-GlcNAc-(1-&gt;4)-alpha-D-Man]-L-Thr-[protein] + ATP = 3-O-[beta-D-GalNAc-(1-&gt;3)-beta-D-GlcNAc-(1-&gt;4)-(O-6-P-alpha-D-Man)]-Thr-[protein] + ADP + H(+). Functionally, protein O-mannose kinase that specifically mediates phosphorylation at the 6-position of an O-mannose of the trisaccharide (N-acetylgalactosamine (GalNAc)-beta-1,3-N-acetylglucosamine (GlcNAc)-beta-1,4-mannose) to generate phosphorylated O-mannosyl trisaccharide (N-acetylgalactosamine-beta-1,3-N-acetylglucosamine-beta-1,4-(phosphate-6-)mannose). Phosphorylated O-mannosyl trisaccharide is a carbohydrate structure present in alpha-dystroglycan (DAG1), which is required for binding laminin G-like domain-containing extracellular proteins with high affinity. Only shows kinase activity when the GalNAc-beta-3-GlcNAc-beta-terminus is linked to the 4-position of O-mannose, suggesting that this disaccharide serves as the substrate recognition motif. This Mus musculus (Mouse) protein is Protein O-mannose kinase (Pomk).